We begin with the raw amino-acid sequence, 70 residues long: Gas vesicle protein A (70 aa).

Belongs to the gas vesicle GvpA family. In terms of assembly, the gas vesicle shell is 2 nm thick and consists of a single layer of this protein. It forms helical ribs nearly perpendicular to the long axis of the vesicle.

The protein resides in the gas vesicle shell. Its function is as follows. Gas vesicles are hollow, gas filled proteinaceous nanostructures found in some microorganisms. During planktonic growth they allow positioning of the organism at a favorable depth for light or nutrient acquisition. GvpA forms the protein shell. The polypeptide is Gas vesicle protein A (Ancylobacter aquaticus).